The following is a 465-amino-acid chain: Probable spore coat protein DDB_G0283555 (465 aa).

Residues 1–22 (MRINNLLVCLVLVFSTLSISNA) form the signal peptide. A DSCP-N domain is found at 35 to 153 (RNCDSLSEDQ…RYPVCKGGGG (119 aa)). 7 consecutive Follistatin-like domains span residues 160–182 (PCKN…AYCV), 195–217 (LCKA…ACCV), 229–251 (LCDA…ANCV), 257–280 (ECEH…PHCQ), 287–309 (LCRN…PTCI), 318–340 (PCRD…PSCV), and 435–458 (LCEF…PVCL).

May contribute to the structure of the coat at the interface between the middle, cellulosic layer and the outer, electron-dense, proteinaceous layer. In Dictyostelium discoideum (Social amoeba), this protein is Probable spore coat protein DDB_G0283555.